Consider the following 294-residue polypeptide: 4-hydroxy-tetrahydrodipicolinate synthase (294 aa).

Threonine 47 provides a ligand contact to pyruvate. The Proton donor/acceptor role is filled by tyrosine 135. The active-site Schiff-base intermediate with substrate is the lysine 164. Residue valine 206 coordinates pyruvate.

It belongs to the DapA family. As to quaternary structure, homotetramer; dimer of dimers.

It is found in the cytoplasm. It catalyses the reaction L-aspartate 4-semialdehyde + pyruvate = (2S,4S)-4-hydroxy-2,3,4,5-tetrahydrodipicolinate + H2O + H(+). It functions in the pathway amino-acid biosynthesis; L-lysine biosynthesis via DAP pathway; (S)-tetrahydrodipicolinate from L-aspartate: step 3/4. Its function is as follows. Catalyzes the condensation of (S)-aspartate-beta-semialdehyde [(S)-ASA] and pyruvate to 4-hydroxy-tetrahydrodipicolinate (HTPA). In Lachnoclostridium phytofermentans (strain ATCC 700394 / DSM 18823 / ISDg) (Clostridium phytofermentans), this protein is 4-hydroxy-tetrahydrodipicolinate synthase.